Here is a 906-residue protein sequence, read N- to C-terminus: Aconitate hydratase A (906 aa).

Positions 1 to 2 (MS) are excised as a propeptide. Cys441, Cys507, and Cys510 together coordinate [4Fe-4S] cluster.

Belongs to the aconitase/IPM isomerase family. As to quaternary structure, monomer. [4Fe-4S] cluster serves as cofactor.

It carries out the reaction citrate = D-threo-isocitrate. It catalyses the reaction (2S,3R)-3-hydroxybutane-1,2,3-tricarboxylate = 2-methyl-cis-aconitate + H2O. The protein operates within carbohydrate metabolism; tricarboxylic acid cycle; isocitrate from oxaloacetate: step 2/2. It functions in the pathway organic acid metabolism; propanoate degradation. In terms of biological role, involved in the catabolism of short chain fatty acids (SCFA) via the tricarboxylic acid (TCA)(acetyl degradation route) and probably the 2-methylcitrate cycle I (propionate degradation route). Catalyzes the reversible isomerization of citrate to isocitrate via cis-aconitate. Could catalyze the hydration of 2-methyl-cis-aconitate to yield (2R,3S)-2-methylisocitrate. The apo form of AcnA functions as a RNA-binding regulatory protein. The sequence is that of Aconitate hydratase A (acn) from Deinococcus radiodurans (strain ATCC 13939 / DSM 20539 / JCM 16871 / CCUG 27074 / LMG 4051 / NBRC 15346 / NCIMB 9279 / VKM B-1422 / R1).